Here is a 165-residue protein sequence, read N- to C-terminus: Large ribosomal subunit protein uL10 (165 aa).

This sequence belongs to the universal ribosomal protein uL10 family. Part of the ribosomal stalk of the 50S ribosomal subunit. The N-terminus interacts with L11 and the large rRNA to form the base of the stalk. The C-terminus forms an elongated spine to which L12 dimers bind in a sequential fashion forming a multimeric L10(L12)X complex.

Its function is as follows. Forms part of the ribosomal stalk, playing a central role in the interaction of the ribosome with GTP-bound translation factors. The protein is Large ribosomal subunit protein uL10 of Pectobacterium carotovorum subsp. carotovorum (strain PC1).